A 374-amino-acid polypeptide reads, in one-letter code: Conserved virulence factor C (374 aa).

Belongs to the CvfC family.

Its function is as follows. Required for hemolysin production. This chain is Conserved virulence factor C (cvfC), found in Staphylococcus aureus (strain MRSA252).